Consider the following 157-residue polypeptide: MAKASLLILAAIFLGVITPSCLSDNILYSGETLSTGEFLNYGSFVFIMQEDCNLVLYDVDKPIWATNTGGLSRSCFLSMQTDGNLVVYNPSNKPIWASNTGGQNGNYVCILQKDRNVVIYGTDRWATGTHTGLVGIPASPPSEKYPTAGKIKLVTAK.

The segment at residues methionine 1–proline 19 is a signal peptide (or 23; in 70% of the molecules). One can recognise a Bulb-type lectin domain in the interval aspartate 24–glycine 132. Alpha-D-mannopyranose-binding residues include glutamine 49, aspartate 51, asparagine 53, tyrosine 57, aspartate 60, lysine 61, tryptophan 64, alanine 65, asparagine 67, glutamine 80, aspartate 82, asparagine 84, tyrosine 88, isoleucine 95, tryptophan 96, asparagine 99, asparagine 106, glutamine 112, aspartate 114, asparagine 116, tyrosine 120, and tryptophan 125. A disulfide bridge connects residues cysteine 52 and cysteine 75. The propeptide at threonine 129–lysine 157 is removed in mature form.

Homotetramer.

The protein resides in the secreted. In terms of biological role, mannose-specific lectin which binds alpha-D-linked mannose. Displays a high affinity for alpha-(1-3)-mannose oligomers. Displays antiviral activity and therefore may contribute to defense against infections. The protein is Mannose-specific lectin of Galanthus nivalis (Common snowdrop).